Consider the following 100-residue polypeptide: Small ubiquitin-related modifier 1 (100 aa).

Residues 19-96 form the Ubiquitin-like domain; that stretch reads EYIKLKVIGQ…IEVYQEQTGG (78 aa). A Glycyl lysine isopeptide (Gly-Lys) (interchain with K-? in acceptor proteins) cross-link involves residue glycine 96. A propeptide spanning residues 97–100 is cleaved from the precursor; the sequence is CRND.

The protein belongs to the ubiquitin family. SUMO subfamily. As to quaternary structure, interacts with sae2, ube2i, ranbp2, pias1 and pias2. Covalently attached to a number of proteins. Cleavage of precursor form by a sentrin-specific protease is necessary for function.

It is found in the nucleus membrane. It localises to the nucleus speckle. The protein localises to the cytoplasm. The protein resides in the nucleus. Its subcellular location is the PML body. It is found in the cell membrane. Ubiquitin-like protein that can be covalently attached to proteins as a monomer or a lysine-linked polymer. Covalent attachment via an isopeptide bond to its substrates requires prior activation by the E1 complex sae1-sae2 and linkage to the E2 enzyme ube2i. This post-translational modification on lysine residues of proteins plays a crucial role in a number of cellular processes such as nuclear transport, DNA replication and repair, mitosis and signal transduction. Polymeric sumo1 chains are also susceptible to polyubiquitination which functions as a signal for proteasomal degradation of modified proteins. The protein is Small ubiquitin-related modifier 1 (sumo1) of Danio rerio (Zebrafish).